The following is a 601-amino-acid chain: Probable serine/threonine-protein kinase WNK3 (601 aa).

The 258-residue stretch at 34-291 (GRFNEILGKG…ARELLDDPFL (258 aa)) folds into the Protein kinase domain. ATP contacts are provided by residues 114–117 (TELF) and Lys-164. Asp-181 (proton acceptor) is an active-site residue. Disordered stretches follow at residues 470–498 (GWRPGPATDDDDDDDLVGGGDDPDAPGGA) and 551–601 (ADDD…SEQP). The segment covering 477–493 (TDDDDDDDLVGGGDDPD) has biased composition (acidic residues). Positions 560–571 (LQGSSSDTGGSN) are enriched in polar residues. Basic and acidic residues predominate over residues 572–583 (HEQHAMGKDKEV).

This sequence belongs to the protein kinase superfamily. Ser/Thr protein kinase family. WNK subfamily.

The enzyme catalyses L-seryl-[protein] + ATP = O-phospho-L-seryl-[protein] + ADP + H(+). It carries out the reaction L-threonyl-[protein] + ATP = O-phospho-L-threonyl-[protein] + ADP + H(+). The polypeptide is Probable serine/threonine-protein kinase WNK3 (WNK3) (Oryza sativa subsp. japonica (Rice)).